Reading from the N-terminus, the 108-residue chain is UPF0235 protein Rpal_0418 (108 aa).

It belongs to the UPF0235 family.

This Rhodopseudomonas palustris (strain TIE-1) protein is UPF0235 protein Rpal_0418.